The chain runs to 258 residues: Mediator of RNA polymerase II transcription subunit 7 (258 aa).

Disordered stretches follow at residues 1–39 (MLPGFGATQTVSPFPNPPEYASAYTSDRIDNGSAPPPPH) and 202–243 (EKET…PPSV). Residues 203–217 (KETEEDEEMKEDDEE) show a composition bias toward acidic residues. Residues 220 to 229 (STSSSEGNQK) are compositionally biased toward polar residues.

This sequence belongs to the Mediator complex subunit 7 family. In terms of assembly, component of the Mediator complex.

It is found in the nucleus. Functionally, component of the Mediator complex, a coactivator involved in the regulated transcription of nearly all RNA polymerase II-dependent genes. Mediator functions as a bridge to convey information from gene-specific regulatory proteins to the basal RNA polymerase II transcription machinery. Mediator is recruited to promoters by direct interactions with regulatory proteins and serves as a scaffold for the assembly of a functional preinitiation complex with RNA polymerase II and the general transcription factors. In Caenorhabditis briggsae, this protein is Mediator of RNA polymerase II transcription subunit 7 (let-49).